Here is a 146-residue protein sequence, read N- to C-terminus: Hemoglobin subunit beta (146 aa).

Valine 1 bears the N-acetylvaline mark. The region spanning 2–146 (HLSGEEKAAV…VANALAHKYH (145 aa)) is the Globin domain. Threonine 12 is subject to Phosphothreonine. Serine 44 carries the phosphoserine modification. Lysine 59 is subject to N6-acetyllysine. Histidine 63 serves as a coordination point for heme b. At lysine 82 the chain carries N6-acetyllysine. Heme b is bound at residue histidine 92. The residue at position 93 (cysteine 93) is an S-nitrosocysteine. At lysine 144 the chain carries N6-acetyllysine.

This sequence belongs to the globin family. As to quaternary structure, heterotetramer of two alpha chains and two beta chains. In terms of tissue distribution, red blood cells.

Involved in oxygen transport from the lung to the various peripheral tissues. This chain is Hemoglobin subunit beta (HBB), found in Pteropus alecto (Black flying fox).